The following is a 385-amino-acid chain: 1-deoxy-D-xylulose 5-phosphate reductoisomerase (385 aa).

6 residues coordinate NADPH: Thr-10, Gly-11, Ser-12, Ile-13, Lys-37, and Asn-124. Lys-125 is a 1-deoxy-D-xylulose 5-phosphate binding site. Residue Glu-126 participates in NADPH binding. Mn(2+) is bound at residue Asp-150. Ser-151, Glu-152, Ser-176, and His-199 together coordinate 1-deoxy-D-xylulose 5-phosphate. Glu-152 is a Mn(2+) binding site. Residue Gly-205 coordinates NADPH. Ser-212, Asn-217, Lys-218, and Glu-221 together coordinate 1-deoxy-D-xylulose 5-phosphate. Mn(2+) is bound at residue Glu-221.

This sequence belongs to the DXR family. It depends on Mg(2+) as a cofactor. Requires Mn(2+) as cofactor.

The catalysed reaction is 2-C-methyl-D-erythritol 4-phosphate + NADP(+) = 1-deoxy-D-xylulose 5-phosphate + NADPH + H(+). Its pathway is isoprenoid biosynthesis; isopentenyl diphosphate biosynthesis via DXP pathway; isopentenyl diphosphate from 1-deoxy-D-xylulose 5-phosphate: step 1/6. Catalyzes the NADPH-dependent rearrangement and reduction of 1-deoxy-D-xylulose-5-phosphate (DXP) to 2-C-methyl-D-erythritol 4-phosphate (MEP). The protein is 1-deoxy-D-xylulose 5-phosphate reductoisomerase of Clostridium botulinum (strain 657 / Type Ba4).